Here is a 373-residue protein sequence, read N- to C-terminus: Muscleblind-like protein 2 (373 aa).

4 consecutive C3H1-type zinc fingers follow at residues 13 to 41 (WLTLEVCRQFQRGTCSRSDEECKFAHPPK), 47 to 73 (NGRVIACFDSLKGRCSRENCKYLHPPT), 176 to 204 (TDKLEVCREFQRGNCARGETDCRFAHPAD), and 212 to 238 (DNTVTVCMDYIKGRCMREKCKYFHPPA).

It belongs to the muscleblind family. In terms of assembly, interacts with ITGA3. Expressed in heart, brain, placenta, lung, liver, skeletal muscle, kidney and pancreas.

It localises to the nucleus. The protein localises to the cytoplasm. In terms of biological role, mediates pre-mRNA alternative splicing regulation. Acts either as activator or repressor of splicing on specific pre-mRNA targets. Inhibits cardiac troponin-T (TNNT2) pre-mRNA exon inclusion but induces insulin receptor (IR) pre-mRNA exon inclusion in muscle. Antagonizes the alternative splicing activity pattern of CELF proteins. RNA-binding protein that binds to 5'ACACCC-3' core sequence, termed zipcode, within the 3'UTR of ITGA3. Binds to CUG triplet repeat expansion in myotonic dystrophy muscle cells by sequestering the target RNAs. Together with RNA binding proteins RBPMS and RBFOX2, activates vascular smooth muscle cells alternative splicing events. Regulates NCOR2 alternative splicing. Seems to regulate expression and localization of ITGA3 by transporting it from the nucleus to cytoplasm at adhesion plaques. May play a role in myotonic dystrophy pathophysiology (DM). The chain is Muscleblind-like protein 2 (MBNL2) from Homo sapiens (Human).